Reading from the N-terminus, the 238-residue chain is Phosphoribosylaminoimidazole-succinocarboxamide synthase (238 aa).

The protein belongs to the SAICAR synthetase family.

It carries out the reaction 5-amino-1-(5-phospho-D-ribosyl)imidazole-4-carboxylate + L-aspartate + ATP = (2S)-2-[5-amino-1-(5-phospho-beta-D-ribosyl)imidazole-4-carboxamido]succinate + ADP + phosphate + 2 H(+). It participates in purine metabolism; IMP biosynthesis via de novo pathway; 5-amino-1-(5-phospho-D-ribosyl)imidazole-4-carboxamide from 5-amino-1-(5-phospho-D-ribosyl)imidazole-4-carboxylate: step 1/2. The protein is Phosphoribosylaminoimidazole-succinocarboxamide synthase (purC) of Pyrococcus horikoshii (strain ATCC 700860 / DSM 12428 / JCM 9974 / NBRC 100139 / OT-3).